A 428-amino-acid polypeptide reads, in one-letter code: Flotillin-2 (428 aa).

Gly2 is lipidated: N-myristoyl glycine. Cys4 is lipidated: S-palmitoyl cysteine; by ZDHHC5. Cys19 is lipidated: S-palmitoyl cysteine. Cys20 carries the S-palmitoyl cysteine; by ZDHHC5 lipid modification. Phosphoserine is present on Ser405.

The protein belongs to the band 7/mec-2 family. Flotillin subfamily. Heterooligomeric complex of flotillin-1 and flotillin-2 and caveolin-1 and caveolin-2. Interacts with ECPAS. ZDHHC5-catalyzed palmitoylation may be required for the formation of higher-order complexes and for neurite outgrowth in cultured neural stem cells. In terms of tissue distribution, expressed in many tissues, including suprabasal epidermis, hair follicles, heart, lung, thymus, spleen, liver, kidney and brain. Not expressed in skeletal muscle.

The protein resides in the cell membrane. Its subcellular location is the membrane. It localises to the caveola. It is found in the endosome. In terms of biological role, may act as a scaffolding protein within caveolar membranes, functionally participating in formation of caveolae or caveolae-like vesicles. May be involved in epidermal cell adhesion and epidermal structure and function. This is Flotillin-2 (Flot2) from Mus musculus (Mouse).